We begin with the raw amino-acid sequence, 187 residues long: MDFYSLIFLSCALGMDAFAVSLCKGFSVKKLHLKHYLIVGIYFGGFQALMPTIGYFIGITFASFIASIDHWIAFILLSLIGLKMIKESLENENCDSNANQFGFKTMLALAIATSIDALAVGVSFAFLNVNLLLAIFLIGIITFILCIIALKIGNKFGIYLKNKAELLGGLVLIILGVKILIEHLFFD.

A run of 6 helical transmembrane segments spans residues Phe-3–Cys-23, His-35–Tyr-55, Phe-56–Leu-76, Leu-107–Leu-127, Val-129–Ala-149, and Leu-166–Phe-186.

This sequence belongs to the MntP (TC 9.B.29) family.

It localises to the cell inner membrane. Functionally, probably functions as a manganese efflux pump. The protein is Putative manganese efflux pump MntP of Campylobacter jejuni (strain RM1221).